We begin with the raw amino-acid sequence, 277 residues long: 3-methyl-2-oxobutanoate hydroxymethyltransferase (277 aa).

The Mg(2+) site is built by Asp53 and Asp96. 3-methyl-2-oxobutanoate is bound by residues 53 to 54, Asp96, and Lys126; that span reads DS. Glu128 contacts Mg(2+). Residue Glu195 is the Proton acceptor of the active site.

Belongs to the PanB family. Homodecamer; pentamer of dimers. It depends on Mg(2+) as a cofactor.

It is found in the cytoplasm. The catalysed reaction is 3-methyl-2-oxobutanoate + (6R)-5,10-methylene-5,6,7,8-tetrahydrofolate + H2O = 2-dehydropantoate + (6S)-5,6,7,8-tetrahydrofolate. Its pathway is cofactor biosynthesis; (R)-pantothenate biosynthesis; (R)-pantoate from 3-methyl-2-oxobutanoate: step 1/2. In terms of biological role, catalyzes the reversible reaction in which hydroxymethyl group from 5,10-methylenetetrahydrofolate is transferred onto alpha-ketoisovalerate to form ketopantoate. In Pelodictyon phaeoclathratiforme (strain DSM 5477 / BU-1), this protein is 3-methyl-2-oxobutanoate hydroxymethyltransferase.